Here is a 453-residue protein sequence, read N- to C-terminus: MAGAAAGGRGGGAWGPGRGGAGGLRRGCSPPAPAGSPRAGLQPLRATIPFQLQQPHQRRDGGGRAASVPCSVAPEKSVCRPQPLQVRRTFSLDTILSSYLLGQWPRDADGAFTCCTNDKATQTPLSWQELEGERASSCAHKRSASWGSTDHRKEISKLKQQLQRTKLSRSGKEKERGSPLLGDHAVRGALRASPPSFPSGSPVLRLSPCLHRSLEGLNQELEEVFVKEQGEEELLRILDIPDGHRAPAPPQSGSCDHPLLLLEPGNLASSPSMSLASPQPCGLASHEEHRGAAEELASTPNDKASSPGHPAFLEDGSPSPVLAFAASPRPNHSYIFKREPPEGCEKVRVFEEATSPGPDLAFLTSCPDKNKVHFNPTGSAFCPVNLMKPLFPGMGFIFRNCPSNPGSPLPPASPRPPPRKDPEASKASPLPFEPWQRTPPSEEPVLFQSSLMV.

Over residues 1-25 (MAGAAAGGRGGGAWGPGRGGAGGLR) the composition is skewed to gly residues. Residues 1–45 (MAGAAAGGRGGGAWGPGRGGAGGLRRGCSPPAPAGSPRAGLQPLR) form a disordered region. A phosphoserine mark is found at Ser-29 and Ser-67. Residues 149–175 (TDHRKEISKLKQQLQRTKLSRSGKEKE) are a coiled coil. The tract at residues 159–201 (KQQLQRTKLSRSGKEKERGSPLLGDHAVRGALRASPPSFPSGS) is disordered. Ser-178, Ser-193, Ser-201, and Ser-213 each carry phosphoserine. Residues 269 to 278 (SSPSMSLASP) show a composition bias toward low complexity. The tract at residues 269 to 320 (SSPSMSLASPQPCGLASHEEHRGAAEELASTPNDKASSPGHPAFLEDGSPSP) is disordered. A Phosphothreonine modification is found at Thr-299. Phosphoserine is present on residues Ser-319 and Ser-327. Thr-354 is modified (phosphothreonine). Residues 406–416 (GSPLPPASPRP) are compositionally biased toward pro residues. The segment at 406–453 (GSPLPPASPRPPPRKDPEASKASPLPFEPWQRTPPSEEPVLFQSSLMV) is disordered. Phosphoserine occurs at positions 413 and 428.

The protein belongs to the FAM117 family.

This is Protein FAM117A (FAM117A) from Homo sapiens (Human).